Here is a 640-residue protein sequence, read N- to C-terminus: Spindle assembly abnormal protein 6 homolog (640 aa).

Positions V40–L92 constitute a PISA domain. Residues L154–V475 are a coiled coil.

As to quaternary structure, nine homodimers form a cartwheel structure with an internal diameter of 23 nM and radial spokes connecting to the microtubule triplets.

Its subcellular location is the cytoplasm. The protein resides in the cytoskeleton. It is found in the microtubule organizing center. It localises to the centrosome. Its function is as follows. Central scaffolding component of the centrioles ensuring their 9-fold symmetry. Required for centrosome biogenesis and duplication: required both for mother-centriole-dependent centriole duplication and deuterosome-dependent centriole amplification in multiciliated cells. This chain is Spindle assembly abnormal protein 6 homolog (SASS6), found in Gallus gallus (Chicken).